Here is a 207-residue protein sequence, read N- to C-terminus: Putative 3-methyladenine DNA glycosylase (207 aa).

Belongs to the DNA glycosylase MPG family.

The protein is Putative 3-methyladenine DNA glycosylase of Listeria monocytogenes serotype 4b (strain CLIP80459).